A 166-amino-acid polypeptide reads, in one-letter code: NAD(P)H-quinone oxidoreductase subunit I, chloroplastic (166 aa).

2 4Fe-4S ferredoxin-type domains span residues 55–84 (GRIHFEFDKCIACEVCVRVCPIDLPVVDWK) and 95–124 (LNYSIDFGICIFCGNCVEYCPTNCLSMTEE). Residues C64, C67, C70, C74, C104, C107, C110, and C114 each contribute to the [4Fe-4S] cluster site.

Belongs to the complex I 23 kDa subunit family. As to quaternary structure, NDH is composed of at least 16 different subunits, 5 of which are encoded in the nucleus. [4Fe-4S] cluster serves as cofactor.

The protein resides in the plastid. The protein localises to the chloroplast thylakoid membrane. It carries out the reaction a plastoquinone + NADH + (n+1) H(+)(in) = a plastoquinol + NAD(+) + n H(+)(out). The enzyme catalyses a plastoquinone + NADPH + (n+1) H(+)(in) = a plastoquinol + NADP(+) + n H(+)(out). Its function is as follows. NDH shuttles electrons from NAD(P)H:plastoquinone, via FMN and iron-sulfur (Fe-S) centers, to quinones in the photosynthetic chain and possibly in a chloroplast respiratory chain. The immediate electron acceptor for the enzyme in this species is believed to be plastoquinone. Couples the redox reaction to proton translocation, and thus conserves the redox energy in a proton gradient. The sequence is that of NAD(P)H-quinone oxidoreductase subunit I, chloroplastic from Pentanema britannica (British yellowhead).